We begin with the raw amino-acid sequence, 334 residues long: Desumoylating isopeptidase 1 homolog (334 aa).

Positions 30 to 174 constitute a PPPDE domain; the sequence is TVVRLNVYDM…FLEKCIPQEW (145 aa). Active-site residues include H55 and C133. The segment covering 310-325 has biased composition (polar residues); the sequence is SNIGKTNSTPGTTSNG. Residues 310–334 are disordered; that stretch reads SNIGKTNSTPGTTSNGLAKPTCSEC.

Belongs to the DeSI family. Expressed in the pharynx, hypodermis, intestine, head neuron and tail neuron.

It is found in the cytoplasm. The protein resides in the nucleus. Functionally, protease which deconjugates SUMO from some substrate proteins. Has isopeptidase but not SUMO-processing activity. Collaborates with ubql-1 in the export of ubiquitinated proteins from the nucleus to the cytoplasm. This is Desumoylating isopeptidase 1 homolog from Caenorhabditis elegans.